The sequence spans 310 residues: Alpha/beta hydrolase domain-containing protein 17A (310 aa).

The tract at residues valine 38–alanine 61 is disordered. Residues serine 190, aspartate 255, and histidine 284 each act as charge relay system in the active site. Phosphoserine is present on serine 307.

This sequence belongs to the AB hydrolase superfamily. ABHD17 family. Palmitoylated on cysteine residues located in a cysteine cluster at the N-terminus which promotes membrane localization. Palmitoylation is required for post-synaptic localization and for depalmitoylating activity towards DLG4/PSD95. As to expression, expressed in brain (at protein level). Expressed in hippocampal neurons.

It is found in the cell membrane. It localises to the recycling endosome membrane. Its subcellular location is the cell projection. The protein localises to the dendritic spine. The protein resides in the postsynaptic density membrane. It carries out the reaction S-hexadecanoyl-L-cysteinyl-[protein] + H2O = L-cysteinyl-[protein] + hexadecanoate + H(+). Hydrolyzes fatty acids from S-acylated cysteine residues in proteins. Has depalmitoylating activity towards NRAS. Has depalmitoylating activity towards DLG4/PSD95. May have depalmitoylating activity towards MAP6. The protein is Alpha/beta hydrolase domain-containing protein 17A of Rattus norvegicus (Rat).